Consider the following 180-residue polypeptide: Large ribosomal subunit protein uL5 (180 aa).

It belongs to the universal ribosomal protein uL5 family. In terms of assembly, part of the 50S ribosomal subunit; part of the 5S rRNA/L5/L18/L25 subcomplex. Contacts the 5S rRNA and the P site tRNA. Forms a bridge to the 30S subunit in the 70S ribosome.

In terms of biological role, this is one of the proteins that bind and probably mediate the attachment of the 5S RNA into the large ribosomal subunit, where it forms part of the central protuberance. In the 70S ribosome it contacts protein S13 of the 30S subunit (bridge B1b), connecting the 2 subunits; this bridge is implicated in subunit movement. Contacts the P site tRNA; the 5S rRNA and some of its associated proteins might help stabilize positioning of ribosome-bound tRNAs. This is Large ribosomal subunit protein uL5 from Acholeplasma laidlawii (strain PG-8A).